The primary structure comprises 152 residues: Large ribosomal subunit protein bL9 (152 aa).

Belongs to the bacterial ribosomal protein bL9 family.

Its function is as follows. Binds to the 23S rRNA. In Mycoplasmopsis synoviae (strain 53) (Mycoplasma synoviae), this protein is Large ribosomal subunit protein bL9.